We begin with the raw amino-acid sequence, 443 residues long: EGF-containing fibulin-like extracellular matrix protein 2 (443 aa).

The signal sequence occupies residues 1–23; that stretch reads MLPCASCLPGSLLLWALLLLLLG. The EGF-like 1; atypical domain maps to 36–81; the sequence is YTECTDGYEWDPDSQHCRDVNECLTIPEACKGEMKCINHYGGYLCL. 18 disulfide bridges follow: Cys-58/Cys-121, Cys-65/Cys-80, Cys-71/Cys-109, Cys-127/Cys-140, Cys-134/Cys-149, Cys-151/Cys-162, Cys-168/Cys-177, Cys-173/Cys-186, Cys-188/Cys-201, Cys-207/Cys-217, Cys-213/Cys-226, Cys-228/Cys-241, Cys-247/Cys-258, Cys-254/Cys-267, Cys-269/Cys-281, Cys-287/Cys-300, Cys-294/Cys-309, and Cys-315/Cys-327. The 41-residue stretch at 123–163 folds into the EGF-like 2; calcium-binding domain; it reads DVDECAQALHDCRPSQDCHNLPGSYQCTCPDGYRKIGPECV. The EGF-like 3; calcium-binding domain maps to 164–202; the sequence is DIDECRYRYCQHRCVNLPGSFRCQCEPGFQLGPNNRSCV. N-linked (GlcNAc...) asparagine glycosylation is present at Asn-198. The EGF-like 4; calcium-binding domain maps to 203–242; sequence DVNECDMGAPCEQRCFNSYGTFLCRCHQGYELHRDGFSCS. Residues 243 to 282 form the EGF-like 5; calcium-binding domain; that stretch reads DIDECSYSSYLCQYRCINEPGRFSCHCPQGYQLLATRLCQ. The region spanning 283–328 is the EGF-like 6; calcium-binding domain; the sequence is DIDECESGAHQCSEAQTCVNFHGGYRCVDTNRCVEPYIQVSENRCL. An N-linked (GlcNAc...) asparagine glycan is attached at Asn-394.

It belongs to the fibulin family. In terms of assembly, homodimer; disulfide-linked. Multimer; allows heparin binding. Monomer. Interacts with FBN1 (via N-terminal domain); this interaction inhibits EFEMP2 binding to LOX and ELN. Interacts with LOX (via propeptide); this interaction is strong and facilitates formation of ternary complexes with ELN during elastic fiber assembly; this interaction limits interaction of EFEMP2 with FBLN5. Interacts with PITX2. Interacts with ELN with moderate affinity; this interaction regulates ELN self-assembly maturation stage. Interacts with FBLN5 with moderate affinity. Interacts with LOXL1 (via propeptide), LTBP1 and TGFB1 stronger than with LOXL2 and LTBP3. Interacts with PCOLCE. Interacts with collagen type IV trimer (COL4A1-COL4A1-COL4A2), NID2 and moderately with COL15A1-derived endostatin. Interacts with EMILIN1; this interaction promotes the incorporation of EFEMP2 into the extracellular matrix. Interacts with LTBP4; the LTBP4 long form (LTBP4L) has a stronger binding affinity than the LTBP4 short form and the LTBP4 long form promotes fibrillar deposition of EFEMP2. N-glycosylated; contains mostly complex-type glycans. Not O-glycosylated. Post-translationally, cleaved by ELANE; produces a 50-55 kDa fragment. Cleaved by MMP2 and MMP9; produces several fragments.

The protein resides in the secreted. It localises to the extracellular space. Its subcellular location is the extracellular matrix. It is found in the basement membrane. Its function is as follows. Plays a crucial role in elastic fiber formation in tissue, and in the formation of ultrastructural connections between elastic laminae and smooth muscle cells in the aorta, therefore participates in terminal differentiation and maturation of smooth muscle cell (SMC) and in the mechanical properties and wall integrity maintenance of the aorta. In addition, is involved in the control of collagen fibril assembly in tissue throught proteolytic activation of LOX leading to cross- linking of collagen and elastin. Also promotes ELN coacervation and participates in the deposition of ELN coacervates on to microfibrils but also regulates ELN cross- linking through LOX interaction. Moreover adheres to the cells through heparin binding in a calcium-dependent manner and regulates vascularlar smooth muscle cells proliferation through angiotensin signaling. The protein is EGF-containing fibulin-like extracellular matrix protein 2 of Homo sapiens (Human).